A 241-amino-acid chain; its full sequence is Transforming protein p29 (241 aa).

Residues 1–41 (MPAARAAPAADEPMRDPVAPVRAPALPRPAPGAVAPASGGA) form a disordered region. 2 S-palmitoyl cysteine; by host lipidation sites follow: Cys233 and Cys236. Cys238 carries the post-translational modification Cysteine methyl ester; by host. Residue Cys238 is the site of S-farnesyl cysteine; by host attachment. Positions 239–241 (VLS) are cleaved as a propeptide — removed in mature form.

The protein belongs to the small GTPase superfamily. Ras family.

It is found in the host cell membrane. It carries out the reaction GTP + H2O = GDP + phosphate + H(+). With respect to regulation, alternates between an inactive form bound to GDP and an active form bound to GTP. Activated by a guanine nucleotide-exchange factor (GEF) and inactivated by a GTPase-activating protein (GAP). The sequence is that of Transforming protein p29 (H-RAS) from Mus musculus (Mouse).